The chain runs to 309 residues: Sulfate adenylyltransferase subunit 2 (309 aa).

Belongs to the PAPS reductase family. CysD subfamily. In terms of assembly, heterodimer composed of CysD, the smaller subunit, and CysN.

It carries out the reaction sulfate + ATP + H(+) = adenosine 5'-phosphosulfate + diphosphate. It functions in the pathway sulfur metabolism; hydrogen sulfide biosynthesis; sulfite from sulfate: step 1/3. With CysN forms the ATP sulfurylase (ATPS) that catalyzes the adenylation of sulfate producing adenosine 5'-phosphosulfate (APS) and diphosphate, the first enzymatic step in sulfur assimilation pathway. APS synthesis involves the formation of a high-energy phosphoric-sulfuric acid anhydride bond driven by GTP hydrolysis by CysN coupled to ATP hydrolysis by CysD. The chain is Sulfate adenylyltransferase subunit 2 from Mycobacterium bovis (strain ATCC BAA-935 / AF2122/97).